We begin with the raw amino-acid sequence, 159 residues long: Cell division protein SepF (159 aa).

The tract at residues 23–69 (DYIEEDEEQKPASKSAFDSDHTVTPLASTTAPAASSTTKPFPGGRVN) is disordered. The segment covering 44 to 64 (TVTPLASTTAPAASSTTKPFP) has biased composition (low complexity).

It belongs to the SepF family. Homodimer. Interacts with FtsZ.

Its subcellular location is the cytoplasm. Its function is as follows. Cell division protein that is part of the divisome complex and is recruited early to the Z-ring. Probably stimulates Z-ring formation, perhaps through the cross-linking of FtsZ protofilaments. Its function overlaps with FtsA. This Bifidobacterium longum (strain DJO10A) protein is Cell division protein SepF.